We begin with the raw amino-acid sequence, 189 residues long: MSVTTEARPVPRLKQRYREEIAPALREEFSYGNVMQIPGVVKVVVNMGVGDAARDAKLIDGATRDLAAITGQKPAVRRAKKSIAQFKLREGQPIGAKVTLRGDRMWEFLDRLVTIALPRIRDFRGLSPKQFDGAGNYTFGVIEQSIFHEIDIDRIDRVRGMDITVVTTATNDDEGRALLRALGFPFRES.

Belongs to the universal ribosomal protein uL5 family. As to quaternary structure, part of the 50S ribosomal subunit; part of the 5S rRNA/L5/L18/L25 subcomplex. Contacts the 5S rRNA and the P site tRNA. Forms a bridge to the 30S subunit in the 70S ribosome.

Its function is as follows. This is one of the proteins that bind and probably mediate the attachment of the 5S RNA into the large ribosomal subunit, where it forms part of the central protuberance. In the 70S ribosome it contacts protein S13 of the 30S subunit (bridge B1b), connecting the 2 subunits; this bridge is implicated in subunit movement. Contacts the P site tRNA; the 5S rRNA and some of its associated proteins might help stabilize positioning of ribosome-bound tRNAs. In Parafrankia sp. (strain EAN1pec), this protein is Large ribosomal subunit protein uL5.